Here is a 241-residue protein sequence, read N- to C-terminus: Methylthioribulose-1-phosphate dehydratase (241 aa).

The span at 1 to 17 shows a compositional bias: polar residues; that stretch reads MAKQVENNNNDHLVQST. Residues 1 to 21 are disordered; it reads MAKQVENNNNDHLVQSTDPEH. A substrate-binding site is contributed by Cys100. Residues His117 and His119 each coordinate Zn(2+). Catalysis depends on Glu146, which acts as the Proton donor/acceptor. His202 contributes to the Zn(2+) binding site.

The protein belongs to the aldolase class II family. MtnB subfamily. It depends on Zn(2+) as a cofactor.

It is found in the cytoplasm. The catalysed reaction is 5-(methylsulfanyl)-D-ribulose 1-phosphate = 5-methylsulfanyl-2,3-dioxopentyl phosphate + H2O. Its pathway is amino-acid biosynthesis; L-methionine biosynthesis via salvage pathway; L-methionine from S-methyl-5-thio-alpha-D-ribose 1-phosphate: step 2/6. Its function is as follows. Catalyzes the dehydration of methylthioribulose-1-phosphate (MTRu-1-P) into 2,3-diketo-5-methylthiopentyl-1-phosphate (DK-MTP-1-P). The chain is Methylthioribulose-1-phosphate dehydratase from Aspergillus flavus (strain ATCC 200026 / FGSC A1120 / IAM 13836 / NRRL 3357 / JCM 12722 / SRRC 167).